The sequence spans 338 residues: Ketol-acid reductoisomerase (NADP(+)) (338 aa).

The KARI N-terminal Rossmann domain maps to 1–181 (MNVFYDKDAD…GGGRAGIIET (181 aa)). Residues 24–27 (YGSQ), arginine 47, and serine 52 each bind NADP(+). Residue histidine 107 is part of the active site. Glycine 133 serves as a coordination point for NADP(+). A KARI C-terminal knotted domain is found at 182–327 (NFREETETDL…AKLRAMMPWI (146 aa)). Mg(2+) contacts are provided by aspartate 190, glutamate 194, glutamate 226, and glutamate 230. Serine 251 contributes to the substrate binding site.

The protein belongs to the ketol-acid reductoisomerase family. The cofactor is Mg(2+).

The enzyme catalyses (2R)-2,3-dihydroxy-3-methylbutanoate + NADP(+) = (2S)-2-acetolactate + NADPH + H(+). It catalyses the reaction (2R,3R)-2,3-dihydroxy-3-methylpentanoate + NADP(+) = (S)-2-ethyl-2-hydroxy-3-oxobutanoate + NADPH + H(+). It functions in the pathway amino-acid biosynthesis; L-isoleucine biosynthesis; L-isoleucine from 2-oxobutanoate: step 2/4. Its pathway is amino-acid biosynthesis; L-valine biosynthesis; L-valine from pyruvate: step 2/4. Involved in the biosynthesis of branched-chain amino acids (BCAA). Catalyzes an alkyl-migration followed by a ketol-acid reduction of (S)-2-acetolactate (S2AL) to yield (R)-2,3-dihydroxy-isovalerate. In the isomerase reaction, S2AL is rearranged via a Mg-dependent methyl migration to produce 3-hydroxy-3-methyl-2-ketobutyrate (HMKB). In the reductase reaction, this 2-ketoacid undergoes a metal-dependent reduction by NADPH to yield (R)-2,3-dihydroxy-isovalerate. This is Ketol-acid reductoisomerase (NADP(+)) from Burkholderia ambifaria (strain MC40-6).